Here is a 158-residue protein sequence, read N- to C-terminus: Curculin-2 (158 aa).

Residues M1–A22 form the signal peptide. One can recognise a Bulb-type lectin domain in the interval D23 to C131. C51 and C74 are disulfide-bonded. An N-linked (GlcNAc...) asparagine glycan is attached at N103. Residues G136–N158 constitute a propeptide that is removed on maturation.

As to quaternary structure, heterodimer with curculin-1; Disulfide-linked.

Its function is as follows. Taste-modifying protein; sweet-tasting. After curculin, water elicits a sweet taste, and sour substances induce a stronger sense of sweetness. This Molineria latifolia (Lumbah) protein is Curculin-2.